A 235-amino-acid chain; its full sequence is Purine nucleoside phosphorylase DeoD-type (235 aa).

Position 4 (histidine 4) interacts with a purine D-ribonucleoside. Phosphate is bound by residues glycine 20, arginine 24, arginine 43, and 87–90; that span reads RVGT. Residues glutamate 162, 179 to 181, and 203 to 204 each bind a purine D-ribonucleoside; these read EME and SD. The Proton donor role is filled by aspartate 204.

The protein belongs to the PNP/UDP phosphorylase family. As to quaternary structure, homohexamer; trimer of homodimers.

The catalysed reaction is a purine D-ribonucleoside + phosphate = a purine nucleobase + alpha-D-ribose 1-phosphate. It catalyses the reaction a purine 2'-deoxy-D-ribonucleoside + phosphate = a purine nucleobase + 2-deoxy-alpha-D-ribose 1-phosphate. Functionally, catalyzes the reversible phosphorolytic breakdown of the N-glycosidic bond in the beta-(deoxy)ribonucleoside molecules, with the formation of the corresponding free purine bases and pentose-1-phosphate. The protein is Purine nucleoside phosphorylase DeoD-type of Bacillus cereus (strain ATCC 14579 / DSM 31 / CCUG 7414 / JCM 2152 / NBRC 15305 / NCIMB 9373 / NCTC 2599 / NRRL B-3711).